We begin with the raw amino-acid sequence, 907 residues long: Lateral signaling target protein 2 homolog (907 aa).

Disordered stretches follow at residues 339-395 (SSDN…DPAN), 463-604 (LTDS…SGDA), 662-688 (NSSPPEPEDPPEPAANSTDKPKEPDPA), 716-756 (EVNA…SENG), and 770-834 (GSGG…EERR). Polar residues predominate over residues 351 to 361 (DISSFYTSNNR). Positions 367 to 393 (EPNEDDDVSESNDEDEDEGEEVDEDDP) are enriched in acidic residues. Composition is skewed to polar residues over residues 463-475 (LTDSGLGTANPSL) and 486-495 (PVTSSHPIAQ). Positions 501-516 (SEEEGEVDEYDEDDSE) are enriched in acidic residues. Residues 525–549 (HHTKHQRRHRHHHHHHRKHYSKHRS) show a composition bias toward basic residues. Positions 550–565 (SAAGSAGTSGTTCSAA) are enriched in low complexity. Over residues 568–580 (QISSCDTSPSSGG) the composition is skewed to polar residues. A compositionally biased stretch (gly residues) spans 592-602 (GSSGNSSGGSG). Residues 742-751 (APRTMMTTAA) are compositionally biased toward polar residues. Positions 777-793 (GSSRSSQERSVSLSETS) are enriched in low complexity. Polar residues predominate over residues 816–826 (PKSVQSEQSGQ). An FYVE-type zinc finger spans residues 845–905 (DGDAPRCMAC…VCRECFVREV (61 aa)). Zn(2+) contacts are provided by cysteine 851, cysteine 854, cysteine 867, cysteine 870, cysteine 875, cysteine 878, cysteine 897, and cysteine 900.

It belongs to the lst-2 family.

In terms of biological role, negative regulator of epidermal growth factor receptor (EGFR) signaling. This is Lateral signaling target protein 2 homolog from Culex quinquefasciatus (Southern house mosquito).